We begin with the raw amino-acid sequence, 120 residues long: Large ribosomal subunit protein uL18 (120 aa).

This sequence belongs to the universal ribosomal protein uL18 family. As to quaternary structure, part of the 50S ribosomal subunit; part of the 5S rRNA/L5/L18/L25 subcomplex. Contacts the 5S and 23S rRNAs.

Functionally, this is one of the proteins that bind and probably mediate the attachment of the 5S RNA into the large ribosomal subunit, where it forms part of the central protuberance. This is Large ribosomal subunit protein uL18 from Brucella anthropi (strain ATCC 49188 / DSM 6882 / CCUG 24695 / JCM 21032 / LMG 3331 / NBRC 15819 / NCTC 12168 / Alc 37) (Ochrobactrum anthropi).